The primary structure comprises 398 residues: Cell division protein FtsZ (398 aa).

GTP is bound by residues 24–28 (GAGGN), 111–113 (GTG), Glu-154, Arg-158, and Asp-202. The tract at residues 333-381 (GRNNKSETSPISQSEDSEKEKFKWPYSQSESTQDKTLETKPAEQVSEGA) is disordered. Positions 364–373 (TQDKTLETKP) are enriched in basic and acidic residues.

The protein belongs to the FtsZ family. Homodimer. Polymerizes to form a dynamic ring structure in a strictly GTP-dependent manner. Interacts directly with several other division proteins.

It is found in the cytoplasm. Its function is as follows. Essential cell division protein that forms a contractile ring structure (Z ring) at the future cell division site. The regulation of the ring assembly controls the timing and the location of cell division. One of the functions of the FtsZ ring is to recruit other cell division proteins to the septum to produce a new cell wall between the dividing cells. Binds GTP and shows GTPase activity. This chain is Cell division protein FtsZ, found in Wolbachia sp.